Here is a 530-residue protein sequence, read N- to C-terminus: MPSNMKQFCKISVWLQQHDPDLLEIINNLCMLGNLSAAKYKHGVTFIYPKQAKIRDEIKKHAYSNDPSQAIKTLESLILPFYIPTPAEFTGEIGSYTGVKLEVEKTEANKVILKNGEAVLVPAADFKPFPDRRLAVWIMESGSMPLEGPPYKRKKEGGGNDPPVPKHISPYTPRTRIAIEVEKAFDDCMRQNWCSVNNPYLAKSVSLLSFLSLNHPTEFIKVLPLIDFDPLVTFYLLLEPYKTHGDDFLIPETILFGPTGWNGTDLYQSAMLEFKKFFTQITRQTFMDIADSATKEVDVPICYSDPETVHSYTNHVRTEILHHNAVNKVTTPNLVVQAYNELEQTNTIRHYGPIFPESTINALRFWKKLWQDEQRFVIHGLHRTLMDQPTYETSEFAEIVRNLRFSRPGNNYINELNITSPAMYGDKHTTGDIAPNDRFAMLVAFINSTDFLYTAIPEEKVGGNETQTSSLTDLVPTRLHSFLNHNLSKLKILNRAQQTVRNILSNDCLNQLKHYVKHTGKNEILKLLQE.

The protein belongs to the asfivirus polyprotein pp62 family. In terms of assembly, monomer. Predominantly exists as a monomer, with very little dimers. Homodimerization seems to be linked to low pH. As to quaternary structure, homodimer; disulfide-linked. Homotrimer; disulfide-linked. Homohexamer. In terms of processing, monoubiquitinated in vitro by viral UBCv1. Post-translationally, specific enzymatic cleavages in vivo by the viral pS273R protease yield mature proteins.

It localises to the host cytoplasm. The protein resides in the host perinuclear region. It is found in the virion. In terms of biological role, essential for the correct assembly and maturation of the core of the virion. Component of the core shell. Binds to phosphatidylserine, which may enable the core shell binding with the inner membrane. Its function is as follows. Component of the core shell. Binds to phosphatidylserine and DNA, which may link the core shell to the inner membrane and to the viral nucleoid. Functionally, component of the core shell. The sequence is that of Polyprotein pp62 from African swine fever virus (strain Badajoz 1971 Vero-adapted) (Ba71V).